The following is a 369-amino-acid chain: Histidinol-phosphate aminotransferase (369 aa).

Position 223 is an N6-(pyridoxal phosphate)lysine (Lys223).

This sequence belongs to the class-II pyridoxal-phosphate-dependent aminotransferase family. Histidinol-phosphate aminotransferase subfamily. In terms of assembly, homodimer. It depends on pyridoxal 5'-phosphate as a cofactor.

It carries out the reaction L-histidinol phosphate + 2-oxoglutarate = 3-(imidazol-4-yl)-2-oxopropyl phosphate + L-glutamate. The protein operates within amino-acid biosynthesis; L-histidine biosynthesis; L-histidine from 5-phospho-alpha-D-ribose 1-diphosphate: step 7/9. Functionally, catalyzes the conversion of imidazole acetol phosphate to histidinol phosphate. Can also transaminate aromatic amino acids and histidine in addition to histidinol phosphate. In Zymomonas mobilis subsp. mobilis (strain ATCC 31821 / ZM4 / CP4), this protein is Histidinol-phosphate aminotransferase.